The following is a 511-amino-acid chain: Rab proteins geranylgeranyltransferase component A (511 aa).

Belongs to the Rab GDI family.

The protein localises to the cytoplasm. It is found in the perinuclear region. It localises to the cytoskeleton. The protein resides in the spindle pole. In terms of biological role, binds unprenylated Rab proteins, presents it to the catalytic component B, and remains bound to it after the geranylgeranyl transfer reaction. The component A is thought to be regenerated by transferring its prenylated Rab to a protein acceptor. The protein is Rab proteins geranylgeranyltransferase component A of Drosophila melanogaster (Fruit fly).